A 103-amino-acid chain; its full sequence is Small ribosomal subunit protein uS10 (103 aa).

The protein belongs to the universal ribosomal protein uS10 family. As to quaternary structure, part of the 30S ribosomal subunit.

Its function is as follows. Involved in the binding of tRNA to the ribosomes. The protein is Small ribosomal subunit protein uS10 of Jannaschia sp. (strain CCS1).